We begin with the raw amino-acid sequence, 231 residues long: 5'-methylthioadenosine/S-adenosylhomocysteine nucleosidase (231 aa).

The active-site Proton acceptor is E12. Substrate-binding positions include G78, M153, and 174–175 (ME). Residue D198 is the Proton donor of the active site.

Belongs to the PNP/UDP phosphorylase family. MtnN subfamily.

The catalysed reaction is S-adenosyl-L-homocysteine + H2O = S-(5-deoxy-D-ribos-5-yl)-L-homocysteine + adenine. The enzyme catalyses S-methyl-5'-thioadenosine + H2O = 5-(methylsulfanyl)-D-ribose + adenine. It catalyses the reaction 5'-deoxyadenosine + H2O = 5-deoxy-D-ribose + adenine. It participates in amino-acid biosynthesis; L-methionine biosynthesis via salvage pathway; S-methyl-5-thio-alpha-D-ribose 1-phosphate from S-methyl-5'-thioadenosine (hydrolase route): step 1/2. In terms of biological role, catalyzes the irreversible cleavage of the glycosidic bond in both 5'-methylthioadenosine (MTA) and S-adenosylhomocysteine (SAH/AdoHcy) to adenine and the corresponding thioribose, 5'-methylthioribose and S-ribosylhomocysteine, respectively. Also cleaves 5'-deoxyadenosine, a toxic by-product of radical S-adenosylmethionine (SAM) enzymes, into 5-deoxyribose and adenine. This Bacillus velezensis (strain DSM 23117 / BGSC 10A6 / LMG 26770 / FZB42) (Bacillus amyloliquefaciens subsp. plantarum) protein is 5'-methylthioadenosine/S-adenosylhomocysteine nucleosidase.